The following is a 175-amino-acid chain: COMPASS component SDC1 (175 aa).

The span at 1–12 shows a compositional bias: polar residues; the sequence is MNESENSPQHNE. A disordered region spans residues 1–45; sequence MNESENSPQHNEVTVPMVEDTSSNADIPMEQIQREDNKNYDKHDN. The span at 32 to 45 shows a compositional bias: basic and acidic residues; it reads IQREDNKNYDKHDN. Residues 121–162 are DPY-30; that stretch reads QTRKYLNTNVTPHLLAGMRLIAVQQPEDPLRVLGEYLIEQSN.

The protein belongs to the dpy-30 family. As to quaternary structure, component of the Set1C/COMPASS complex which consists of SET1(2), BRE2(2), SPP1(2), SDC1(1), SHG1(1), SWD1(1), SWD2(1), and SWD3(1). Interacts directly with BRE2.

It is found in the nucleus. Component of the Set1C/COMPASS complex that specifically mono-, di- and trimethylates histone H3 to form H3K4me1/2/3, which subsequently plays a role in telomere length maintenance and transcription elongation regulation. COMPASS recognizes ubiquitinated H2B on one face of the nucleosome which stimulates the methylation of H3 on the opposing face. The sequence is that of COMPASS component SDC1 from Saccharomyces cerevisiae (strain ATCC 204508 / S288c) (Baker's yeast).